The primary structure comprises 464 residues: Protein FAM90A16 (464 aa).

Disordered stretches follow at residues 1 to 42, 70 to 389, and 415 to 437; these read MMAR…DPRL, PATL…HDGA, and HSPEKPGAFLAQSPHVSEKSEAP. Composition is skewed to basic and acidic residues over residues 74 to 89 and 97 to 114; these read GKKEGKENLKPWKPRV and NKDKGEKEERPRQQDPQR. A compositionally biased stretch (low complexity) spans 180 to 197; it reads LASLSPLRKASLSSSSSL.

This sequence belongs to the FAM90 family.

The chain is Protein FAM90A16 from Homo sapiens (Human).